The sequence spans 191 residues: MKDEHNQEHDHLSQKEPEFCEKACACKEQQNEEMQEASEKECEIKEDFELKYKEMHEKYLRVHADFENVKKRLERDKSMALEYAYEKIALDLLPVIDALLGAYKSAAEVDKESALTKGLELTMEKLHEVLARHGIEGIECLEEFDPNFHNAIMQVKSEEKENGKIVQVLQQGYKYKGRVLRPAMVSIAKND.

Belongs to the GrpE family. As to quaternary structure, homodimer.

The protein localises to the cytoplasm. In terms of biological role, participates actively in the response to hyperosmotic and heat shock by preventing the aggregation of stress-denatured proteins, in association with DnaK and GrpE. It is the nucleotide exchange factor for DnaK and may function as a thermosensor. Unfolded proteins bind initially to DnaJ; upon interaction with the DnaJ-bound protein, DnaK hydrolyzes its bound ATP, resulting in the formation of a stable complex. GrpE releases ADP from DnaK; ATP binding to DnaK triggers the release of the substrate protein, thus completing the reaction cycle. Several rounds of ATP-dependent interactions between DnaJ, DnaK and GrpE are required for fully efficient folding. The sequence is that of Protein GrpE from Helicobacter pylori (strain P12).